The chain runs to 70 residues: uncharacterized protein (70 aa).

It to M.pneumoniae MPN377.

This is an uncharacterized protein from Ureaplasma parvum serovar 3 (strain ATCC 700970).